The chain runs to 634 residues: Polyadenylate-binding protein 1A (634 aa).

RRM domains lie at 11–89 (ASLY…WSQR), 99–175 (GNIF…RFKS), 191–268 (TNVY…RAQK), and 294–370 (VNLY…LAQR). Positions 541-618 (QEPLTASMLA…AVAVLQAHQA (78 aa)) constitute a PABC domain.

It belongs to the polyadenylate-binding protein type-1 family. In terms of assembly, interacts with ybx1; interaction recruits pabpc1a on C5-methylcytosine (m5C)-containing mRNAs, preventing their degradation.

Its subcellular location is the cytoplasm. Binds the poly(A) tail of mRNA. Prevents mRNA deadenylation and confers poly(A) stability. Binds to N6-methyladenosine (m6A)-containing mRNAs. Stimulates the translation of mRNAs to which it is bound, acting, at least in part, with dazl. Involved in the maternal-to-zygotic transition in early embryo via interaction with ybx1: interaction recruits pabpc1a on C5-methylcytosine (m5C)-containing maternal mRNAs, preventing their degradation. The protein is Polyadenylate-binding protein 1A of Danio rerio (Zebrafish).